The primary structure comprises 245 residues: Uridylate kinase (245 aa).

16 to 19 contributes to the ATP binding site; sequence KLSG. Gly-58 provides a ligand contact to UMP. Positions 59 and 63 each coordinate ATP. Residues Asp-78 and 139-146 each bind UMP; that span reads TGNPFFTT. ATP is bound by residues Thr-166, Tyr-172, and Asp-175.

This sequence belongs to the UMP kinase family. As to quaternary structure, homohexamer.

It is found in the cytoplasm. The enzyme catalyses UMP + ATP = UDP + ADP. It participates in pyrimidine metabolism; CTP biosynthesis via de novo pathway; UDP from UMP (UMPK route): step 1/1. With respect to regulation, inhibited by UTP. Its function is as follows. Catalyzes the reversible phosphorylation of UMP to UDP. This Idiomarina loihiensis (strain ATCC BAA-735 / DSM 15497 / L2-TR) protein is Uridylate kinase.